A 667-amino-acid polypeptide reads, in one-letter code: Transketolase (667 aa).

H27 serves as a coordination point for substrate. Thiamine diphosphate is bound by residues H67 and 115–117 (GPL). Residue D156 coordinates Mg(2+). Residues G157 and N186 each contribute to the thiamine diphosphate site. Mg(2+) contacts are provided by N186 and I188. Substrate contacts are provided by H262, R357, and S384. A thiamine diphosphate-binding site is contributed by H262. The Proton donor role is filled by E411. F437 contributes to the thiamine diphosphate binding site. Substrate contacts are provided by H461, D469, and R520.

This sequence belongs to the transketolase family. Homodimer. Requires Mg(2+) as cofactor. It depends on Ca(2+) as a cofactor. Mn(2+) serves as cofactor. Co(2+) is required as a cofactor. The cofactor is thiamine diphosphate.

The catalysed reaction is D-sedoheptulose 7-phosphate + D-glyceraldehyde 3-phosphate = aldehydo-D-ribose 5-phosphate + D-xylulose 5-phosphate. Functionally, catalyzes the transfer of a two-carbon ketol group from a ketose donor to an aldose acceptor, via a covalent intermediate with the cofactor thiamine pyrophosphate. This chain is Transketolase (tkt), found in Bacillus subtilis (strain 168).